The sequence spans 89 residues: Large ribosomal subunit protein bL27 (89 aa).

The interval 1 to 20 (MAHKKAGGSSRNGRDSAGRR) is disordered.

Belongs to the bacterial ribosomal protein bL27 family.

In Zymomonas mobilis subsp. mobilis (strain ATCC 31821 / ZM4 / CP4), this protein is Large ribosomal subunit protein bL27.